Reading from the N-terminus, the 130-residue chain is Small ribosomal subunit protein uS11 (130 aa).

The protein belongs to the universal ribosomal protein uS11 family. As to quaternary structure, part of the 30S ribosomal subunit. Interacts with proteins S7 and S18. Binds to IF-3.

Located on the platform of the 30S subunit, it bridges several disparate RNA helices of the 16S rRNA. Forms part of the Shine-Dalgarno cleft in the 70S ribosome. The chain is Small ribosomal subunit protein uS11 from Campylobacter lari (strain RM2100 / D67 / ATCC BAA-1060).